Reading from the N-terminus, the 345-residue chain is tRNA N6-adenosine threonylcarbamoyltransferase (345 aa).

Residues His-111 and His-115 each contribute to the Fe cation site. Residues 134–138 (LVSGG), Asp-167, Gly-180, Asp-184, and Asn-278 contribute to the substrate site. Position 306 (Asp-306) interacts with Fe cation.

It belongs to the KAE1 / TsaD family. The cofactor is Fe(2+).

It is found in the cytoplasm. It carries out the reaction L-threonylcarbamoyladenylate + adenosine(37) in tRNA = N(6)-L-threonylcarbamoyladenosine(37) in tRNA + AMP + H(+). Its function is as follows. Required for the formation of a threonylcarbamoyl group on adenosine at position 37 (t(6)A37) in tRNAs that read codons beginning with adenine. Is involved in the transfer of the threonylcarbamoyl moiety of threonylcarbamoyl-AMP (TC-AMP) to the N6 group of A37, together with TsaE and TsaB. TsaD likely plays a direct catalytic role in this reaction. This is tRNA N6-adenosine threonylcarbamoyltransferase from Cyanothece sp. (strain PCC 7425 / ATCC 29141).